Reading from the N-terminus, the 173-residue chain is NADH-ubiquinone oxidoreductase chain 6 (173 aa).

5 consecutive transmembrane segments (helical) span residues 1–21 (MTYL…AVAS), 24–44 (APYF…GVLV), 53–73 (LVLF…SAAL), 86–106 (SVVG…GVFW), and 139–159 (YGGG…FVVL).

Belongs to the complex I subunit 6 family.

Its subcellular location is the mitochondrion membrane. It catalyses the reaction a ubiquinone + NADH + 5 H(+)(in) = a ubiquinol + NAD(+) + 4 H(+)(out). Functionally, core subunit of the mitochondrial membrane respiratory chain NADH dehydrogenase (Complex I) that is believed to belong to the minimal assembly required for catalysis. Complex I functions in the transfer of electrons from NADH to the respiratory chain. The immediate electron acceptor for the enzyme is believed to be ubiquinone. The chain is NADH-ubiquinone oxidoreductase chain 6 (MT-ND6) from Formosania lacustris (Oriental stream loach).